Consider the following 181-residue polypeptide: MELKGTTILAVRGAQGVTIAGDGQVTMGQSIVMKHSARKVRRLYNGRVVAGFAGSTADAFTLFEHFEAKLEEHRGNLVRAAVEMAKSWRKDKYLRRLEAMLLVADNEHILVLSGNGDVIEPDDGIAAIGSGGPYALAAARALARHTQLDAETIAREAMRIAGEICVFTNDHLTVESAETQA.

T6 is an active-site residue. Positions 162, 165, and 168 each coordinate Na(+).

The protein belongs to the peptidase T1B family. HslV subfamily. In terms of assembly, a double ring-shaped homohexamer of HslV is capped on each side by a ring-shaped HslU homohexamer. The assembly of the HslU/HslV complex is dependent on binding of ATP.

The protein resides in the cytoplasm. It catalyses the reaction ATP-dependent cleavage of peptide bonds with broad specificity.. Allosterically activated by HslU binding. Its function is as follows. Protease subunit of a proteasome-like degradation complex believed to be a general protein degrading machinery. In Nitratidesulfovibrio vulgaris (strain ATCC 29579 / DSM 644 / CCUG 34227 / NCIMB 8303 / VKM B-1760 / Hildenborough) (Desulfovibrio vulgaris), this protein is ATP-dependent protease subunit HslV.